Reading from the N-terminus, the 95-residue chain is Co-chaperonin GroES (95 aa).

It belongs to the GroES chaperonin family. As to quaternary structure, heptamer of 7 subunits arranged in a ring. Interacts with the chaperonin GroEL.

The protein resides in the cytoplasm. Its function is as follows. Together with the chaperonin GroEL, plays an essential role in assisting protein folding. The GroEL-GroES system forms a nano-cage that allows encapsulation of the non-native substrate proteins and provides a physical environment optimized to promote and accelerate protein folding. GroES binds to the apical surface of the GroEL ring, thereby capping the opening of the GroEL channel. This chain is Co-chaperonin GroES, found in Xanthomonas axonopodis pv. citri (strain 306).